The chain runs to 158 residues: Cyclic pyranopterin monophosphate synthase (158 aa).

Residues 75-77 and 113-114 each bind substrate; these read LCH and ME. Residue aspartate 128 is part of the active site.

This sequence belongs to the MoaC family. Homohexamer; trimer of dimers.

The enzyme catalyses (8S)-3',8-cyclo-7,8-dihydroguanosine 5'-triphosphate = cyclic pyranopterin phosphate + diphosphate. The protein operates within cofactor biosynthesis; molybdopterin biosynthesis. Catalyzes the conversion of (8S)-3',8-cyclo-7,8-dihydroguanosine 5'-triphosphate to cyclic pyranopterin monophosphate (cPMP). This chain is Cyclic pyranopterin monophosphate synthase, found in Acidiphilium cryptum (strain JF-5).